The primary structure comprises 90 residues: Small ribosomal subunit protein bS20 (90 aa).

The protein belongs to the bacterial ribosomal protein bS20 family.

Its function is as follows. Binds directly to 16S ribosomal RNA. In Mesomycoplasma hyopneumoniae (strain J / ATCC 25934 / NCTC 10110) (Mycoplasma hyopneumoniae), this protein is Small ribosomal subunit protein bS20.